The sequence spans 417 residues: Gamma-glutamyl phosphate reductase (417 aa).

Belongs to the gamma-glutamyl phosphate reductase family.

It localises to the cytoplasm. It catalyses the reaction L-glutamate 5-semialdehyde + phosphate + NADP(+) = L-glutamyl 5-phosphate + NADPH + H(+). It functions in the pathway amino-acid biosynthesis; L-proline biosynthesis; L-glutamate 5-semialdehyde from L-glutamate: step 2/2. Functionally, catalyzes the NADPH-dependent reduction of L-glutamate 5-phosphate into L-glutamate 5-semialdehyde and phosphate. The product spontaneously undergoes cyclization to form 1-pyrroline-5-carboxylate. This Enterobacter sp. (strain 638) protein is Gamma-glutamyl phosphate reductase.